The primary structure comprises 674 residues: Pesticidal crystal protein Cry24Aa (674 aa).

The protein belongs to the delta endotoxin family.

Its function is as follows. Promotes colloidosmotic lysis by binding to the midgut epithelial cells of insects. This chain is Pesticidal crystal protein Cry24Aa (cry24Aa), found in Bacillus thuringiensis subsp. jegathesan.